The sequence spans 333 residues: Tetraacyldisaccharide 4'-kinase (333 aa).

Position 60–67 (60–67 (TVGGTGKT)) interacts with ATP.

This sequence belongs to the LpxK family.

The catalysed reaction is a lipid A disaccharide + ATP = a lipid IVA + ADP + H(+). Its pathway is glycolipid biosynthesis; lipid IV(A) biosynthesis; lipid IV(A) from (3R)-3-hydroxytetradecanoyl-[acyl-carrier-protein] and UDP-N-acetyl-alpha-D-glucosamine: step 6/6. Functionally, transfers the gamma-phosphate of ATP to the 4'-position of a tetraacyldisaccharide 1-phosphate intermediate (termed DS-1-P) to form tetraacyldisaccharide 1,4'-bis-phosphate (lipid IVA). The chain is Tetraacyldisaccharide 4'-kinase from Ectopseudomonas mendocina (strain ymp) (Pseudomonas mendocina).